Here is a 477-residue protein sequence, read N- to C-terminus: Dihydrolipoyl dehydrogenase (477 aa).

FAD contacts are provided by residues 34–49, Lys-58, and Gly-122; that span reads EKYK…GGTC. An intrachain disulfide couples Cys-49 to Cys-54. Residues 188 to 192, Glu-211, Val-245, and 276 to 279 each bind NAD(+); these read GAGVI and AVGR. FAD contacts are provided by Asp-319 and Ala-327. The Proton acceptor role is filled by His-451.

The protein belongs to the class-I pyridine nucleotide-disulfide oxidoreductase family. Homodimer. Requires FAD as cofactor.

It is found in the cytoplasm. The catalysed reaction is N(6)-[(R)-dihydrolipoyl]-L-lysyl-[protein] + NAD(+) = N(6)-[(R)-lipoyl]-L-lysyl-[protein] + NADH + H(+). Functionally, the pyruvate dehydrogenase complex catalyzes the overall conversion of pyruvate to acetyl-CoA and CO(2). It contains multiple copies of three enzymatic components: pyruvate dehydrogenase (E1), dihydrolipoamide acetyltransferase (E2) and lipoamide dehydrogenase (E3). This chain is Dihydrolipoyl dehydrogenase, found in Azotobacter vinelandii.